We begin with the raw amino-acid sequence, 113 residues long: TYRO protein tyrosine kinase-binding protein (113 aa).

The signal sequence occupies residues methionine 1–alanine 27. Topologically, residues glutamine 28–proline 40 are extracellular. Residues glycine 41 to valine 61 form a helical membrane-spanning segment. Ca(2+) is bound at residue aspartate 50. The Cytoplasmic portion of the chain corresponds to tyrosine 62–lysine 113. Residues alanine 75 to lysine 113 are disordered. An ITAM domain is found at arginine 80 to glutamine 108. The span at threonine 87–lysine 113 shows a compositional bias: polar residues. 2 positions are modified to phosphotyrosine: tyrosine 91 and tyrosine 102.

The protein belongs to the TYROBP family. As to quaternary structure, homodimer; disulfide-linked. Homotrimer; disulfide-linked. Homotetramer; disulfide-linked. Homotrimers and homotetramers form when low levels of partner receptors are available and is competitive with assembly with interacting receptors. They may represent alternative oligomerization states or may be intermediates in the receptor assembly process. Binding of a metal cation aids in homooligomerization through coordination of the metal ion by the subunits of the oligomer. Interacts with TREM1. Interacts with TREM2. Interacts with CLECSF5. Interacts with CD300LB and CD300C2. Interacts with CD300E. Interacts (via ITAM domain) with SYK (via SH2 domains); activates SYK mediating neutrophils and macrophages integrin-mediated activation. Interacts with KLRC2. Interacts with CD300H. Interacts with KLRD1. Following ligand binding by associated receptors, tyrosine phosphorylated in the ITAM domain which leads to activation of additional tyrosine kinases and subsequent cell activation.

It is found in the cell membrane. Adapter protein which non-covalently associates with activating receptors found on the surface of a variety of immune cells to mediate signaling and cell activation following ligand binding by the receptors. TYROBP is tyrosine-phosphorylated in the ITAM domain following ligand binding by the associated receptors which leads to activation of additional tyrosine kinases and subsequent cell activation. Also has an inhibitory role in some cells. Non-covalently associates with activating receptors of the CD300 family to mediate cell activation. Also mediates cell activation through association with activating receptors of the CD200R family. Required for neutrophil activation mediated by integrin. Required for the activation of myeloid cells mediated by the CLEC5A/MDL1 receptor. Associates with natural killer (NK) cell receptors such as the KLRD1/KLRC2 heterodimer to mediate NK cell activation. Associates with TREM1 to mediate activation of neutrophils and monocytes. Associates with TREM2 on monocyte-derived dendritic cells to mediate up-regulation of chemokine receptor CCR7 and dendritic cell maturation and survival. Association with TREM2 mediates cytokine-induced formation of multinucleated giant cells which are formed by the fusion of macrophages. Stabilizes the TREM2 C-terminal fragment (TREM2-CTF) produced by TREM2 ectodomain shedding which suppresses the release of pro-inflammatory cytokines. In microglia, required with TREM2 for phagocytosis of apoptotic neurons. Required with ITGAM/CD11B in microglia to control production of microglial superoxide ions which promote the neuronal apoptosis that occurs during brain development. Promotes pro-inflammatory responses in microglia following nerve injury which accelerates degeneration of injured neurons. Positively regulates the expression of the IRAK3/IRAK-M kinase and IL10 production by liver dendritic cells and inhibits their T cell allosimulatory ability. Negatively regulates B cell proliferation. Required for CSF1-mediated osteoclast cytoskeletal organization. Positively regulates multinucleation during osteoclast development. The polypeptide is TYRO protein tyrosine kinase-binding protein (Macaca mulatta (Rhesus macaque)).